We begin with the raw amino-acid sequence, 236 residues long: Eukaryotic translation initiation factor 3 subunit J (236 aa).

The interval 1–84 is disordered; sequence MADDWESAAD…LREEEAEAER (84 aa). The segment covering 28–46 has biased composition (acidic residues); the sequence is GEDEDEDIKDSWEDEEEKK. Composition is skewed to basic and acidic residues over residues 47–58 and 68–77; these read DEEKPTKTEAPA and AKLEQQALRE.

It belongs to the eIF-3 subunit J family. Component of the eukaryotic translation initiation factor 3 (eIF-3) complex. The eIF-3 complex interacts with pix.

It is found in the cytoplasm. Functionally, component of the eukaryotic translation initiation factor 3 (eIF-3) complex, which is involved in protein synthesis of a specialized repertoire of mRNAs and, together with other initiation factors, stimulates binding of mRNA and methionyl-tRNAi to the 40S ribosome. The eIF-3 complex specifically targets and initiates translation of a subset of mRNAs involved in cell proliferation. This is Eukaryotic translation initiation factor 3 subunit J from Drosophila sechellia (Fruit fly).